We begin with the raw amino-acid sequence, 456 residues long: ATP synthase subunit beta 1 (456 aa).

ATP is bound at residue 152 to 159 (GGAGVGKS).

Belongs to the ATPase alpha/beta chains family. In terms of assembly, F-type ATPases have 2 components, CF(1) - the catalytic core - and CF(0) - the membrane proton channel. CF(1) has five subunits: alpha(3), beta(3), gamma(1), delta(1), epsilon(1). CF(0) has three main subunits: a(1), b(2) and c(9-12). The alpha and beta chains form an alternating ring which encloses part of the gamma chain. CF(1) is attached to CF(0) by a central stalk formed by the gamma and epsilon chains, while a peripheral stalk is formed by the delta and b chains.

Its subcellular location is the cell membrane. The enzyme catalyses ATP + H2O + 4 H(+)(in) = ADP + phosphate + 5 H(+)(out). Functionally, produces ATP from ADP in the presence of a proton gradient across the membrane. The catalytic sites are hosted primarily by the beta subunits. The chain is ATP synthase subunit beta 1 from Listeria welshimeri serovar 6b (strain ATCC 35897 / DSM 20650 / CCUG 15529 / CIP 8149 / NCTC 11857 / SLCC 5334 / V8).